A 174-amino-acid chain; its full sequence is Protein FanG (174 aa).

Residues 1–21 (MKKLYKAITVICILMSNLQSA) form the signal peptide. Cysteine 41 and cysteine 75 are oxidised to a cystine.

It localises to the fimbrium. Involved in the biosynthesis of K99 fimbriae. In Escherichia coli, this protein is Protein FanG (fanG).